Reading from the N-terminus, the 258-residue chain is Type III pantothenate kinase (258 aa).

ATP is bound at residue 6–13 (DVGNTNTV). Substrate-binding positions include Y100 and 107 to 110 (GADR). D109 functions as the Proton acceptor in the catalytic mechanism. D129 is a binding site for K(+). ATP is bound at residue T132. T184 contributes to the substrate binding site.

This sequence belongs to the type III pantothenate kinase family. Homodimer. NH4(+) serves as cofactor. K(+) is required as a cofactor.

The protein localises to the cytoplasm. The enzyme catalyses (R)-pantothenate + ATP = (R)-4'-phosphopantothenate + ADP + H(+). Its pathway is cofactor biosynthesis; coenzyme A biosynthesis; CoA from (R)-pantothenate: step 1/5. Catalyzes the phosphorylation of pantothenate (Pan), the first step in CoA biosynthesis. The chain is Type III pantothenate kinase from Bacillus licheniformis (strain ATCC 14580 / DSM 13 / JCM 2505 / CCUG 7422 / NBRC 12200 / NCIMB 9375 / NCTC 10341 / NRRL NRS-1264 / Gibson 46).